The sequence spans 233 residues: Large ribosomal subunit protein uL1 (233 aa).

It belongs to the universal ribosomal protein uL1 family. Part of the 50S ribosomal subunit.

Binds directly to 23S rRNA. The L1 stalk is quite mobile in the ribosome, and is involved in E site tRNA release. In terms of biological role, protein L1 is also a translational repressor protein, it controls the translation of the L11 operon by binding to its mRNA. In Shewanella amazonensis (strain ATCC BAA-1098 / SB2B), this protein is Large ribosomal subunit protein uL1.